The primary structure comprises 339 residues: Adenosine deaminase (339 aa).

Residues His-15 and His-17 each contribute to the Zn(2+) site. The substrate site is built by His-17, Asp-19, and Gly-172. His-199 provides a ligand contact to Zn(2+). Catalysis depends on Glu-202, which acts as the Proton donor. Residue Asp-279 participates in Zn(2+) binding.

It belongs to the metallo-dependent hydrolases superfamily. Adenosine and AMP deaminases family. Adenosine deaminase subfamily. Zn(2+) is required as a cofactor.

It carries out the reaction adenosine + H2O + H(+) = inosine + NH4(+). The enzyme catalyses 2'-deoxyadenosine + H2O + H(+) = 2'-deoxyinosine + NH4(+). Functionally, catalyzes the hydrolytic deamination of adenosine and 2-deoxyadenosine. The chain is Adenosine deaminase from Lacticaseibacillus casei (strain BL23) (Lactobacillus casei).